The primary structure comprises 249 residues: 23S rRNA (guanosine-2'-O-)-methyltransferase RlmB (249 aa).

S-adenosyl-L-methionine contacts are provided by Gly200, Ile220, and Leu229.

This sequence belongs to the class IV-like SAM-binding methyltransferase superfamily. RNA methyltransferase TrmH family. RlmB subfamily.

It is found in the cytoplasm. It catalyses the reaction guanosine(2251) in 23S rRNA + S-adenosyl-L-methionine = 2'-O-methylguanosine(2251) in 23S rRNA + S-adenosyl-L-homocysteine + H(+). Functionally, specifically methylates the ribose of guanosine 2251 in 23S rRNA. The protein is 23S rRNA (guanosine-2'-O-)-methyltransferase RlmB of Xanthomonas axonopodis pv. citri (strain 306).